The chain runs to 460 residues: uncharacterized protein (460 aa).

The region spanning 8 to 66 (PVEKNEFIDVVFEDLTHDGAGVAKVKGYPIFVKNGLPGEEAQIKIIKVKKNFAFGRLMK) is the TRAM domain. C79, C85, C88, and C166 together coordinate [4Fe-4S] cluster. S-adenosyl-L-methionine contacts are provided by Q290, Y319, E340, and D388. The active-site Nucleophile is the C415.

This sequence belongs to the class I-like SAM-binding methyltransferase superfamily. RNA M5U methyltransferase family.

This is an uncharacterized protein from Bacillus cereus (strain ATCC 10987 / NRS 248).